Reading from the N-terminus, the 321-residue chain is tRNA(Ile)-lysidine synthase (321 aa).

ATP is bound at residue 20 to 25; that stretch reads SGGADS.

It belongs to the tRNA(Ile)-lysidine synthase family.

The protein resides in the cytoplasm. The catalysed reaction is cytidine(34) in tRNA(Ile2) + L-lysine + ATP = lysidine(34) in tRNA(Ile2) + AMP + diphosphate + H(+). Functionally, ligates lysine onto the cytidine present at position 34 of the AUA codon-specific tRNA(Ile) that contains the anticodon CAU, in an ATP-dependent manner. Cytidine is converted to lysidine, thus changing the amino acid specificity of the tRNA from methionine to isoleucine. In Bordetella pertussis (strain Tohama I / ATCC BAA-589 / NCTC 13251), this protein is tRNA(Ile)-lysidine synthase.